The following is a 465-amino-acid chain: Iron-sulfur cluster assembly SufBD family protein SAR0880 (465 aa).

Belongs to the iron-sulfur cluster assembly SufBD family.

This Staphylococcus aureus (strain MRSA252) protein is Iron-sulfur cluster assembly SufBD family protein SAR0880.